The chain runs to 476 residues: MNNIIAQQIADQGGVEAWLHAQQHKSLLRFLTCGSVDDGKSTLIGRLLHDTRQIYEDQLSSLHNDSKRHGTQGEKLDLALLVDGLQAEREQGITIDVAYRYFSTEKRKFIIADTPGHEQYTRNMATGASTCDLAILLIDARKGVLDQTRRHSFISTLLGIKHLVVAINKMDLVDYSQATFEQIKQDYLDFATQLPGNLDIRFVPLSALEGENVAAPSGHMGWYSGPTLLDVLETVEVQRVVEQQPMRFPVQYVNRPNLDFRGYAGTLASGSVQVGQRVKVLPSGVESSIARIVTFDGDLQQAAAGEAITLVLKDEIDISRGDLLVDASAELTPVRAATVDVVWMAEQPLAPGQSFDVKIAGKKTRARVKGIQHQVEINSLTQHSIAELPLNAIGLVDIVFDEPMVLDSYQQNPVTGGMIFIDRLSNVTVGAGMIRQPLAEETAAGSTDFSAFELELNALVRRHFPHWNARDLLGGK.

The tr-type G domain maps to 25–241; sequence KSLLRFLTCG…LETVEVQRVV (217 aa). Positions 34–41 are G1; it reads GSVDDGKS. GTP is bound at residue 34 to 41; it reads GSVDDGKS. Residues 92–96 are G2; that stretch reads GITID. The G3 stretch occupies residues 113–116; that stretch reads DTPG. Residues 113–117 and 168–171 contribute to the GTP site; these read DTPGH and NKMD. The G4 stretch occupies residues 168–171; that stretch reads NKMD. The segment at 206-208 is G5; sequence SAL.

The protein belongs to the TRAFAC class translation factor GTPase superfamily. Classic translation factor GTPase family. CysN/NodQ subfamily. Heterodimer composed of CysD, the smaller subunit, and CysN.

The catalysed reaction is sulfate + ATP + H(+) = adenosine 5'-phosphosulfate + diphosphate. It participates in sulfur metabolism; hydrogen sulfide biosynthesis; sulfite from sulfate: step 1/3. Its function is as follows. With CysD forms the ATP sulfurylase (ATPS) that catalyzes the adenylation of sulfate producing adenosine 5'-phosphosulfate (APS) and diphosphate, the first enzymatic step in sulfur assimilation pathway. APS synthesis involves the formation of a high-energy phosphoric-sulfuric acid anhydride bond driven by GTP hydrolysis by CysN coupled to ATP hydrolysis by CysD. The protein is Sulfate adenylyltransferase subunit 1 of Erwinia tasmaniensis (strain DSM 17950 / CFBP 7177 / CIP 109463 / NCPPB 4357 / Et1/99).